The following is a 183-amino-acid chain: Ubiquitin-conjugating enzyme E2-21 kDa (183 aa).

One can recognise a UBC core domain in the interval 17 to 179 (TCMSRIVKEY…VKYFLAERER (163 aa)). The active-site Glycyl thioester intermediate is cysteine 115.

It belongs to the ubiquitin-conjugating enzyme family.

Its subcellular location is the peroxisome. It carries out the reaction S-ubiquitinyl-[E1 ubiquitin-activating enzyme]-L-cysteine + [E2 ubiquitin-conjugating enzyme]-L-cysteine = [E1 ubiquitin-activating enzyme]-L-cysteine + S-ubiquitinyl-[E2 ubiquitin-conjugating enzyme]-L-cysteine.. Its pathway is protein modification; protein ubiquitination. Catalyzes the covalent attachment of ubiquitin to other proteins. Essential for peroxisome biogenesis. Required for UBC4-independent ubiquitination of PEX5. The polypeptide is Ubiquitin-conjugating enzyme E2-21 kDa (PEX4) (Saccharomyces cerevisiae (strain ATCC 204508 / S288c) (Baker's yeast)).